A 291-amino-acid polypeptide reads, in one-letter code: Ribose-phosphate pyrophosphokinase (291 aa).

Residues 34–36 (DGE) and 93–94 (RQ) each bind ATP. Residues His127 and Asp165 each coordinate Mg(2+). Lys188 is an active-site residue. D-ribose 5-phosphate-binding positions include Arg190, Asp216, and 220–224 (STGGT).

This sequence belongs to the ribose-phosphate pyrophosphokinase family. Class III (archaeal) subfamily. It depends on Mg(2+) as a cofactor.

It localises to the cytoplasm. The catalysed reaction is D-ribose 5-phosphate + ATP = 5-phospho-alpha-D-ribose 1-diphosphate + AMP + H(+). It participates in metabolic intermediate biosynthesis; 5-phospho-alpha-D-ribose 1-diphosphate biosynthesis; 5-phospho-alpha-D-ribose 1-diphosphate from D-ribose 5-phosphate (route I): step 1/1. Functionally, involved in the biosynthesis of the central metabolite phospho-alpha-D-ribosyl-1-pyrophosphate (PRPP) via the transfer of pyrophosphoryl group from ATP to 1-hydroxyl of ribose-5-phosphate (Rib-5-P). The sequence is that of Ribose-phosphate pyrophosphokinase from Sulfolobus acidocaldarius (strain ATCC 33909 / DSM 639 / JCM 8929 / NBRC 15157 / NCIMB 11770).